The chain runs to 159 residues: MTRAVCPGSFDPVTNGHLDIVRRAAAIFDELVVATGTNVSKSRLFDPEERLEMLREVCADLPNVTVMGFTGLIVDFCRDIDAQAIVKGLRGGNDYEYELPMAQMNAHLTGVETVFLTTHASWGYVSSSLVKEVASLGGDVSALVPPAVHGRLQARLAAG.

Serine 9 is a substrate binding site. Residues 9–10 and histidine 17 each bind ATP; that span reads SF. The substrate site is built by lysine 41, isoleucine 73, and lysine 87. Residues 88–90, glutamate 98, and 122–128 contribute to the ATP site; these read GLR and WGYVSSS.

This sequence belongs to the bacterial CoaD family. In terms of assembly, homohexamer. Requires Mg(2+) as cofactor.

Its subcellular location is the cytoplasm. It catalyses the reaction (R)-4'-phosphopantetheine + ATP + H(+) = 3'-dephospho-CoA + diphosphate. The protein operates within cofactor biosynthesis; coenzyme A biosynthesis; CoA from (R)-pantothenate: step 4/5. Its function is as follows. Reversibly transfers an adenylyl group from ATP to 4'-phosphopantetheine, yielding dephospho-CoA (dPCoA) and pyrophosphate. This Nocardioides sp. (strain ATCC BAA-499 / JS614) protein is Phosphopantetheine adenylyltransferase.